The chain runs to 454 residues: UDP-glycosyltransferase 79A2 (454 aa).

UDP-alpha-D-glucose-binding positions include Ser-269, 330–331 (WV), 348–356 (HAGYGSVIE), and 370–373 (KVDQ).

Belongs to the UDP-glycosyltransferase family.

In terms of biological role, may glycosylate diterpenes or flavonols in leaves. The protein is UDP-glycosyltransferase 79A2 of Stevia rebaudiana (Stevia).